Here is a 574-residue protein sequence, read N- to C-terminus: MTNNKNFADWDSLECKDLHNDLLYGRFALSPLTAKESRLLKKGLREALLTGILCLRFTHAKIQNACKNLNLMNIVGIQESLDEILKNFGKIILTGKLEEFVGKGPFVAILDVRGPLNAMAVDIELPPGIKVEIETQHIATITEPIPFVVELRIELVSSTSKGETGITDEEGFSIDPNPPIQKVNSSIQGYEYGGQTFQTLFIEILSTSPTVPNKALLLVSMKIMNLFQIVLQAKYLDYKELEKGIHVGVFCVSALRAEQSKWIKTILEDALYMVGGRKHQGPLTDEEDDSIDSNFTPVQNLDCRIESYEEEGQTFQRLFLEIWTKSPTEPQEALWEASAKILELFSLFLQTSKENEKDLKQIIKDWTENKRKHQEVLRLLDSEESGSIGWITKMKLAYMHMTLLSMNAMYILLVHRLKPDYDRYNSITDQIVQELRASLNKLREIQKGEYSEQRILVHSIAQEIEAALQKYETTYKLDDFVIKAKKDMITMIWDKERADLESSLIRWESDEDYLNLKKMNPVEMDRSFAELQYQETLRKEQDEQSSQQQKDQMEKRRWERQNRERERKRGNREF.

The tract at residues 1-352 (MTNNKNFADW…ELFSLFLQTS (352 aa)) is alpha N-terminal domain (alpha-NTD). The tract at residues 419-574 (PDYDRYNSIT…RERKRGNREF (156 aa)) is alpha C-terminal domain (alpha-CTD). Positions 534–574 (QETLRKEQDEQSSQQQKDQMEKRRWERQNRERERKRGNREF) are disordered. Basic and acidic residues predominate over residues 551–574 (DQMEKRRWERQNRERERKRGNREF).

This sequence belongs to the RNA polymerase alpha chain family. In plastids the minimal PEP RNA polymerase catalytic core is composed of four subunits: alpha, beta, beta', and beta''. When a (nuclear-encoded) sigma factor is associated with the core the holoenzyme is formed, which can initiate transcription.

The protein localises to the plastid. It localises to the chloroplast. It carries out the reaction RNA(n) + a ribonucleoside 5'-triphosphate = RNA(n+1) + diphosphate. Its function is as follows. DNA-dependent RNA polymerase catalyzes the transcription of DNA into RNA using the four ribonucleoside triphosphates as substrates. This chain is Putative DNA-directed RNA polymerase subunit alpha-like 1 (rpoAL1-A), found in Pelargonium hortorum (Common geranium).